We begin with the raw amino-acid sequence, 298 residues long: MAVRARDYWDLTKPKVVALIVFTALVGMFLAIPDMPTWLQVRTGALGFLGIWLAASAAAAINQLLDAKIDAQMARTSWRPLVVGKVQPWQVLVFAGALIVISMTILVVWVNVITAVLTFASLIGYAVIYTVYLKRATSQNIVIGGLAGATPPMLGWAAVTGLPTSADWINASLLVLIIFIWTPPHFWALAIFRRADYAKAAIPMLPVTHGVPHTRKQILVYTVLLAIVTLLPVTVGMSGVFYLGGAVVLNAVFLWYAWRMLNPPDELFSMKMFGYSIVYLMALFAFLMVDHLLLPWVR.

9 helical membrane-spanning segments follow: residues 16-36 (VVALIVFTALVGMFLAIPDMP), 45-65 (ALGFLGIWLAASAAAAINQLL), 93-113 (VFAGALIVISMTILVVWVNVI), 114-134 (TAVLTFASLIGYAVIYTVYLK), 141-161 (IVIGGLAGATPPMLGWAAVTG), 172-192 (SLLVLIIFIWTPPHFWALAIF), 223-243 (VLLAIVTLLPVTVGMSGVFYL), 244-264 (GGAVVLNAVFLWYAWRMLNPP), and 277-297 (IVYLMALFAFLMVDHLLLPWV).

The protein belongs to the UbiA prenyltransferase family. Protoheme IX farnesyltransferase subfamily.

The protein localises to the cell inner membrane. The enzyme catalyses heme b + (2E,6E)-farnesyl diphosphate + H2O = Fe(II)-heme o + diphosphate. The protein operates within porphyrin-containing compound metabolism; heme O biosynthesis; heme O from protoheme: step 1/1. Functionally, converts heme B (protoheme IX) to heme O by substitution of the vinyl group on carbon 2 of heme B porphyrin ring with a hydroxyethyl farnesyl side group. The chain is Protoheme IX farnesyltransferase from Xanthomonas oryzae pv. oryzae (strain MAFF 311018).